Consider the following 210-residue polypeptide: Chloramphenicol acetyltransferase (210 aa).

His79 is a catalytic residue.

It belongs to the transferase hexapeptide repeat family.

It carries out the reaction chloramphenicol + acetyl-CoA = chloramphenicol 3-acetate + CoA. Its function is as follows. This enzyme is an effector of chloramphenicol resistance in bacteria. This Klebsiella aerogenes (Enterobacter aerogenes) protein is Chloramphenicol acetyltransferase (catB4).